Here is a 357-residue protein sequence, read N- to C-terminus: SPbeta prophage-derived pesticidal crystal protein-like YokG (357 aa).

It belongs to the cry6A endotoxin family.

This Bacillus subtilis (strain 168) protein is SPbeta prophage-derived pesticidal crystal protein-like YokG (yokG).